The sequence spans 171 residues: Translationally-controlled tumor protein homolog (171 aa).

The 171-residue stretch at 1–171 (MIIYRDCISQ…FKDGLEMEKC (171 aa)) folds into the TCTP domain.

This sequence belongs to the TCTP family. As to expression, expressed by the venom gland.

Its subcellular location is the secreted. Functionally, venom protein that causes edema, enhances vascular permeability and is likely related to the inflammatory activity of the venom. This is Translationally-controlled tumor protein homolog from Micrurus fulvius (Eastern coral snake).